We begin with the raw amino-acid sequence, 102 residues long: Small ribosomal subunit protein uS10 (102 aa).

This sequence belongs to the universal ribosomal protein uS10 family. Part of the 30S ribosomal subunit.

Its function is as follows. Involved in the binding of tRNA to the ribosomes. The sequence is that of Small ribosomal subunit protein uS10 from Lactobacillus helveticus (strain DPC 4571).